The sequence spans 230 residues: Demethylluteothin O-methyltransferase (230 aa).

The protein belongs to the methyltransferase superfamily.

It catalyses the reaction demethylluteothin + S-adenosyl-L-methionine = luteothin + S-adenosyl-L-homocysteine. The protein operates within antibiotic biosynthesis. Its pathway is polyketide biosynthesis. In terms of biological role, methyltransferase involved in the biosynthesis of the antibiotic aureothin, a nitroaryl polyketide metabolite with antifungal, cytotoxic and insecticidal activities. Catalyzes the methylation of demethylluteothin to luteothin (also called deoxyaureothin). Is specific for its gamma-pyrone substrate, and does not act on the alpha-pyrone isomer. This Streptomyces thioluteus protein is Demethylluteothin O-methyltransferase.